The primary structure comprises 908 residues: NADH-quinone oxidoreductase subunit G (908 aa).

One can recognise a 2Fe-2S ferredoxin-type domain in the interval Ala2–Glu83. Cys34, Cys45, Cys48, and Cys67 together coordinate [2Fe-2S] cluster. In terms of domain architecture, 4Fe-4S His(Cys)3-ligated-type spans Glu83–Gly122. Residues His99, Cys103, Cys106, Cys112, Cys151, Cys154, Cys157, Cys201, Cys228, Cys231, Cys235, and Cys263 each contribute to the [4Fe-4S] cluster site. Residues Met221–Asp277 enclose the 4Fe-4S Mo/W bis-MGD-type domain.

This sequence belongs to the complex I 75 kDa subunit family. As to quaternary structure, composed of 13 different subunits. Subunits NuoCD, E, F, and G constitute the peripheral sector of the complex. The cofactor is [2Fe-2S] cluster. [4Fe-4S] cluster serves as cofactor.

It carries out the reaction a quinone + NADH + 5 H(+)(in) = a quinol + NAD(+) + 4 H(+)(out). In terms of biological role, NDH-1 shuttles electrons from NADH, via FMN and iron-sulfur (Fe-S) centers, to quinones in the respiratory chain. The immediate electron acceptor for the enzyme in this species is believed to be ubiquinone. Couples the redox reaction to proton translocation (for every two electrons transferred, four hydrogen ions are translocated across the cytoplasmic membrane), and thus conserves the redox energy in a proton gradient. The sequence is that of NADH-quinone oxidoreductase subunit G (nuoG) from Escherichia coli O157:H7.